Consider the following 295-residue polypeptide: Ribosomal protein L11 methyltransferase (295 aa).

S-adenosyl-L-methionine contacts are provided by Thr-146, Gly-167, Asp-189, and Asn-231.

Belongs to the methyltransferase superfamily. PrmA family.

It localises to the cytoplasm. It carries out the reaction L-lysyl-[protein] + 3 S-adenosyl-L-methionine = N(6),N(6),N(6)-trimethyl-L-lysyl-[protein] + 3 S-adenosyl-L-homocysteine + 3 H(+). Its function is as follows. Methylates ribosomal protein L11. The chain is Ribosomal protein L11 methyltransferase from Vibrio vulnificus (strain CMCP6).